Reading from the N-terminus, the 547-residue chain is CTP synthase (547 aa).

Positions 1–267 (MKTKFIFITG…DQKIAIMLRL (267 aa)) are amidoligase domain. Ser14 is a binding site for CTP. Ser14 contributes to the UTP binding site. Residues 15-20 (SLGKGL) and Asp72 contribute to the ATP site. Mg(2+) is bound by residues Asp72 and Glu141. CTP contacts are provided by residues 148–150 (DIE), 188–193 (KTKPTQ), and Lys224. UTP contacts are provided by residues 188–193 (KTKPTQ) and Lys224. In terms of domain architecture, Glutamine amidotransferase type-1 spans 292–545 (TIGIVGKYVD…IRAAKTHPAG (254 aa)). An L-glutamine-binding site is contributed by Gly354. The active-site Nucleophile; for glutamine hydrolysis is Cys381. L-glutamine contacts are provided by residues 382–385 (LGMQ), Glu405, and Arg473. Residues His518 and Glu520 contribute to the active site.

This sequence belongs to the CTP synthase family. Homotetramer.

The catalysed reaction is UTP + L-glutamine + ATP + H2O = CTP + L-glutamate + ADP + phosphate + 2 H(+). It carries out the reaction L-glutamine + H2O = L-glutamate + NH4(+). The enzyme catalyses UTP + NH4(+) + ATP = CTP + ADP + phosphate + 2 H(+). It functions in the pathway pyrimidine metabolism; CTP biosynthesis via de novo pathway; CTP from UDP: step 2/2. With respect to regulation, allosterically activated by GTP, when glutamine is the substrate; GTP has no effect on the reaction when ammonia is the substrate. The allosteric effector GTP functions by stabilizing the protein conformation that binds the tetrahedral intermediate(s) formed during glutamine hydrolysis. Inhibited by the product CTP, via allosteric rather than competitive inhibition. Catalyzes the ATP-dependent amination of UTP to CTP with either L-glutamine or ammonia as the source of nitrogen. Regulates intracellular CTP levels through interactions with the four ribonucleotide triphosphates. The chain is CTP synthase from Nitratidesulfovibrio vulgaris (strain DP4) (Desulfovibrio vulgaris).